A 545-amino-acid chain; its full sequence is E3 ubiquitin-protein ligase ipaH9.8 (545 aa).

The interaction with target proteins stretch occupies residues 1-242 (MLPINNNFSL…YHGPRIYFSM (242 aa)). LRR repeat units follow at residues 57-77 (NSDE…NLPA), 78-99 (QITL…PVTL), 100-117 (KKLY…VLPP), 118-139 (ALES…PDSL), 140-157 (LTMN…SLPQ), 158-179 (ALKN…SEGN), 182-203 (VVRE…ILNL), and 205-228 (NECS…QRLT). Residues 243 to 250 (SDGQQNTL) form a linker region. The E3 ubiquitin-protein ligase catalytic domain stretch occupies residues 251-545 (HRPLADAVTA…SENGSQLHHS (295 aa)). The NEL domain occupies 253–545 (PLADAVTAWF…SENGSQLHHS (293 aa)). The Glycyl thioester intermediate role is filled by Cys-337.

The protein belongs to the LRR-containing bacterial E3 ligase family. In terms of assembly, also interacts with human and mouse U2AF1 (U2AF35). Post-translationally, ubiquitinated in the presence of host E1 ubiquitin-activating enzyme, E2 ubiquitin-conjugating enzyme and ubiquitin.

Its subcellular location is the secreted. The protein resides in the host cytoplasm. It is found in the host nucleus. It carries out the reaction S-ubiquitinyl-[E2 ubiquitin-conjugating enzyme]-L-cysteine + [acceptor protein]-L-lysine = [E2 ubiquitin-conjugating enzyme]-L-cysteine + N(6)-ubiquitinyl-[acceptor protein]-L-lysine.. With respect to regulation, exists in an autoinhibited state in the absence of substrate protein, due to interactions of the leucine-rich repeats with NEL domain. Is activated upon binding to a substrate protein. Its function is as follows. Effector E3 ubiquitin ligase that interferes with host's ubiquitination pathway and modulates the acute inflammatory responses, thus facilitating bacterial colonization within the host cell. Interacts with IKBKG (NEMO) and TNIP1 (ABIN-1), a ubiquitin-binding adapter protein, which results in TNIP1-dependent 'Lys-27'-linked polyubiquitination of IKBKG. Consequently, polyubiquitinated IKBKG undergoes proteasome-dependent degradation, which perturbs NF-kappa-B activation during bacterial infection. Mediates polyubiquitination of host U2AF1, leading to its proteasomal degradation. Catalyzes 'Lys-48'-linked polyubiquitination and subsequent degradation of a subset of host guanylate-binding proteins (GBP1, GBP2, GBP4 and GBP6), thereby suppressing host cell defense. In contrast, host GBP3 and GBP7 are not ubiquitinated by IpaH9.8. Uses UBE2D2 (UBCH5B) as an E2 ubiquitin-conjugating enzyme. This is E3 ubiquitin-protein ligase ipaH9.8 (ipaH9.8) from Shigella sonnei (strain Ss046).